A 317-amino-acid polypeptide reads, in one-letter code: Acetyl-coenzyme A carboxylase carboxyl transferase subunit alpha (317 aa).

Residues 39–293 (RLESRVNDAM…GDVIAKALAD (255 aa)) form the CoA carboxyltransferase C-terminal domain.

Belongs to the AccA family. Acetyl-CoA carboxylase is a heterohexamer composed of biotin carboxyl carrier protein (AccB), biotin carboxylase (AccC) and two subunits each of ACCase subunit alpha (AccA) and ACCase subunit beta (AccD).

The protein localises to the cytoplasm. The enzyme catalyses N(6)-carboxybiotinyl-L-lysyl-[protein] + acetyl-CoA = N(6)-biotinyl-L-lysyl-[protein] + malonyl-CoA. Its pathway is lipid metabolism; malonyl-CoA biosynthesis; malonyl-CoA from acetyl-CoA: step 1/1. In terms of biological role, component of the acetyl coenzyme A carboxylase (ACC) complex. First, biotin carboxylase catalyzes the carboxylation of biotin on its carrier protein (BCCP) and then the CO(2) group is transferred by the carboxyltransferase to acetyl-CoA to form malonyl-CoA. The polypeptide is Acetyl-coenzyme A carboxylase carboxyl transferase subunit alpha (Agrobacterium fabrum (strain C58 / ATCC 33970) (Agrobacterium tumefaciens (strain C58))).